Reading from the N-terminus, the 311-residue chain is Protoheme IX farnesyltransferase (311 aa).

The next 8 membrane-spanning stretches (helical) occupy residues 30 to 50 (VVQLIVFCAAIGMLLAVPGWP), 55 to 75 (WGVALAASIGIWLVASAAAAF), 108 to 128 (FAVLLCAAGMAVLWVWVNALT), 129 to 149 (MWLTFATFVGYAVIYTVLLKP), 153 to 173 (QNIVIGGASGAMPPVLGWAAM), 182 to 202 (WILCLIIFLWTPPHFWALALY), 233 to 253 (FVLFAATLLPFVYGMSGWFYL), and 287 to 307 (IWHLSLLFAALLLDHYLGPLL).

Belongs to the UbiA prenyltransferase family. Protoheme IX farnesyltransferase subfamily.

The protein resides in the cell inner membrane. The catalysed reaction is heme b + (2E,6E)-farnesyl diphosphate + H2O = Fe(II)-heme o + diphosphate. The protein operates within porphyrin-containing compound metabolism; heme O biosynthesis; heme O from protoheme: step 1/1. In terms of biological role, converts heme B (protoheme IX) to heme O by substitution of the vinyl group on carbon 2 of heme B porphyrin ring with a hydroxyethyl farnesyl side group. This is Protoheme IX farnesyltransferase from Methylibium petroleiphilum (strain ATCC BAA-1232 / LMG 22953 / PM1).